A 186-amino-acid chain; its full sequence is Ribosome-recycling factor (186 aa).

Belongs to the RRF family.

It is found in the cytoplasm. Functionally, responsible for the release of ribosomes from messenger RNA at the termination of protein biosynthesis. May increase the efficiency of translation by recycling ribosomes from one round of translation to another. This Paraburkholderia xenovorans (strain LB400) protein is Ribosome-recycling factor.